The following is a 205-amino-acid chain: Small ribosomal subunit protein uS4 (205 aa).

Residues 1 to 16 (MSKRETTKYKIDRRMG) show a composition bias toward basic and acidic residues. The segment at 1–46 (MSKRETTKYKIDRRMGENIWGRPKSPVNRRDYGPGQHGQRRKGKLS) is disordered. Positions 94-157 (SRLDAVVYRA…KQLVLVLESV (64 aa)) constitute an S4 RNA-binding domain.

This sequence belongs to the universal ribosomal protein uS4 family. In terms of assembly, part of the 30S ribosomal subunit. Contacts protein S5. The interaction surface between S4 and S5 is involved in control of translational fidelity.

In terms of biological role, one of the primary rRNA binding proteins, it binds directly to 16S rRNA where it nucleates assembly of the body of the 30S subunit. Functionally, with S5 and S12 plays an important role in translational accuracy. The sequence is that of Small ribosomal subunit protein uS4 from Bartonella tribocorum (strain CIP 105476 / IBS 506).